Reading from the N-terminus, the 255-residue chain is 5-oxoprolinase subunit A (255 aa).

This sequence belongs to the LamB/PxpA family. In terms of assembly, forms a complex composed of PxpA, PxpB and PxpC.

It catalyses the reaction 5-oxo-L-proline + ATP + 2 H2O = L-glutamate + ADP + phosphate + H(+). Functionally, catalyzes the cleavage of 5-oxoproline to form L-glutamate coupled to the hydrolysis of ATP to ADP and inorganic phosphate. The chain is 5-oxoprolinase subunit A from Thermococcus sibiricus (strain DSM 12597 / MM 739).